The sequence spans 522 residues: ATP synthase subunit alpha (522 aa).

176–183 contacts ATP; that stretch reads GDRQTGKT.

It belongs to the ATPase alpha/beta chains family. As to quaternary structure, F-type ATPases have 2 components, CF(1) - the catalytic core - and CF(0) - the membrane proton channel. CF(1) has five subunits: alpha(3), beta(3), gamma(1), delta(1), epsilon(1). CF(0) has four main subunits: a, b, b' and c.

Its subcellular location is the cell membrane. It catalyses the reaction ATP + H2O + 4 H(+)(in) = ADP + phosphate + 5 H(+)(out). Produces ATP from ADP in the presence of a proton gradient across the membrane. The alpha chain is a regulatory subunit. The sequence is that of ATP synthase subunit alpha from Chloroflexus aggregans (strain MD-66 / DSM 9485).